Reading from the N-terminus, the 777-residue chain is Disintegrin and metalloproteinase domain-containing protein 5 (777 aa).

Positions 1–16 (MFLVLVLLTGLGRLYA) are cleaved as a signal peptide. A propeptide spanning residues 17-142 (GNNPRKTFVQ…VLSGFTHMIY (126 aa)) is cleaved from the precursor. Residues 17-706 (GNNPRKTFVQ…RGYVVLSTKR (690 aa)) lie on the Extracellular side of the membrane. 2 N-linked (GlcNAc...) asparagine glycosylation sites follow: asparagine 49 and asparagine 123. Residues 185–382 (RYIDMYIVVN…YGLTCLRNTS (198 aa)) form the Peptidase M12B domain. Cystine bridges form between cysteine 294-cysteine 377, cysteine 336-cysteine 361, cysteine 338-cysteine 343, and cysteine 456-cysteine 477. Residues 396 to 485 (RRICGNSIRE…DCVHDTYAQN (90 aa)) enclose the Disintegrin domain. An N-linked (GlcNAc...) asparagine glycan is attached at asparagine 566. The EGF-like domain maps to 633–667 (NNGSCNAEIHCQGRGICNNLDNCHCHKGFVPPECA). 3 disulfides stabilise this stretch: cysteine 637-cysteine 649, cysteine 643-cysteine 655, and cysteine 657-cysteine 666. The helical transmembrane segment at 707–727 (FQLIFYIGIPVIIIVAAILIK) threads the bilayer. At 728–777 (QNQLGKLFCRGEKEHMSSVSEDGSRSVTLSATESKFPADTEHSNKEEDAQ) the chain is on the cytoplasmic side. Residues 744 to 760 (SSVSEDGSRSVTLSATE) are compositionally biased toward polar residues. Residues 744 to 777 (SSVSEDGSRSVTLSATESKFPADTEHSNKEEDAQ) are disordered. Positions 763 to 777 (FPADTEHSNKEEDAQ) are enriched in basic and acidic residues.

In terms of assembly, interacts with TEX101. In terms of processing, subject to proteolytic processing during epididymal transit of spermatozoa. Detected in testis.

It localises to the membrane. In terms of biological role, this is a non catalytic metalloprotease-like protein. May play a role in sperm-egg fusion. This Cavia porcellus (Guinea pig) protein is Disintegrin and metalloproteinase domain-containing protein 5 (ADAM5).